The following is a 753-amino-acid chain: Ion-translocating oxidoreductase complex subunit C (753 aa).

4Fe-4S ferredoxin-type domains lie at 367–397 (EMGE…QQLY) and 407–436 (KATA…VQYF). Residues Cys-377, Cys-380, Cys-383, Cys-387, Cys-416, Cys-419, Cys-422, and Cys-426 each contribute to the [4Fe-4S] cluster site. Disordered regions lie at residues 517–561 (AKPD…RKAA), 606–625 (RKAE…PVDP), 640–659 (RKAE…PVDP), and 705–735 (AKAR…AVAA). Positions 526-537 (AAREARKAEARA) are enriched in basic and acidic residues. 3 stretches are compositionally biased toward low complexity: residues 610–622 (QQVA…VAEP), 644–656 (QQVA…VAEP), and 712–735 (QQAA…AVAA).

This sequence belongs to the 4Fe4S bacterial-type ferredoxin family. RnfC subfamily. The complex is composed of six subunits: RnfA, RnfB, RnfC, RnfD, RnfE and RnfG. The cofactor is [4Fe-4S] cluster.

The protein resides in the cell inner membrane. Functionally, part of a membrane-bound complex that couples electron transfer with translocation of ions across the membrane. The sequence is that of Ion-translocating oxidoreductase complex subunit C from Klebsiella pneumoniae (strain 342).